The chain runs to 298 residues: D-alanine--D-alanine ligase (298 aa).

Positions 97-290 (FYSLFKNYIQ…FDELINIIIK (194 aa)) constitute an ATP-grasp domain. 124–173 (PFIIKPRKSGSSKGVYIIHNENEYKFYLEKDLKEFQEVLVQEYIKGREIT) contributes to the ATP binding site. Mg(2+) contacts are provided by Asp-245, Glu-257, and Asn-259.

The protein belongs to the D-alanine--D-alanine ligase family. Requires Mg(2+) as cofactor. Mn(2+) serves as cofactor.

Its subcellular location is the cytoplasm. The enzyme catalyses 2 D-alanine + ATP = D-alanyl-D-alanine + ADP + phosphate + H(+). It functions in the pathway cell wall biogenesis; peptidoglycan biosynthesis. In terms of biological role, cell wall formation. This Petrotoga mobilis (strain DSM 10674 / SJ95) protein is D-alanine--D-alanine ligase.